A 132-amino-acid chain; its full sequence is Small ribosomal subunit protein uS8 (132 aa).

It belongs to the universal ribosomal protein uS8 family. In terms of assembly, part of the 30S ribosomal subunit. Contacts proteins S5 and S12.

Its function is as follows. One of the primary rRNA binding proteins, it binds directly to 16S rRNA central domain where it helps coordinate assembly of the platform of the 30S subunit. This chain is Small ribosomal subunit protein uS8, found in Rickettsia massiliae (strain Mtu5).